Reading from the N-terminus, the 194-residue chain is Imidazoleglycerol-phosphate dehydratase (194 aa).

The protein belongs to the imidazoleglycerol-phosphate dehydratase family.

It is found in the cytoplasm. The catalysed reaction is D-erythro-1-(imidazol-4-yl)glycerol 3-phosphate = 3-(imidazol-4-yl)-2-oxopropyl phosphate + H2O. It participates in amino-acid biosynthesis; L-histidine biosynthesis; L-histidine from 5-phospho-alpha-D-ribose 1-diphosphate: step 6/9. This Bacillus cereus (strain G9842) protein is Imidazoleglycerol-phosphate dehydratase.